The chain runs to 306 residues: MLNYVIKRLLGLIPTLFIVSVLVFLFVHMLPGDPARLIAGPEADAQVIELVRQQLGLDQPLYHQFWHYISNAVQGDFGLSMVSRRPVADEIASRFMPTLWLTITSMVWAVIFGMAAGIIAAVWRNRWPDRLSMTIAVSGISFPAFALGMLLIQVFSVELGWLPTVGADSWQHYILSSLTLGAAVAAVMARFTRASFVDVLSEDYMRTARAKGVSETWVVLKHGLRNAMIPVVTMMGLQFGFLLGGSIVVEKVFNWPGLGRLLVDSVEMRDYPVIQAEILLFSLEFILINLVVDVLYAAINPAIRYK.

The Cytoplasmic portion of the chain corresponds to 1–8 (MLNYVIKR). A helical transmembrane segment spans residues 9 to 29 (LLGLIPTLFIVSVLVFLFVHM). The Periplasmic portion of the chain corresponds to 30–102 (LPGDPARLIA…SRFMPTLWLT (73 aa)). The ABC transmembrane type-1 domain maps to 95–292 (FMPTLWLTIT…LEFILINLVV (198 aa)). Residues 103–123 (ITSMVWAVIFGMAAGIIAAVW) form a helical membrane-spanning segment. Topologically, residues 124-134 (RNRWPDRLSMT) are cytoplasmic. A helical membrane pass occupies residues 135–155 (IAVSGISFPAFALGMLLIQVF). Topologically, residues 156–168 (SVELGWLPTVGAD) are periplasmic. The helical transmembrane segment at 169-189 (SWQHYILSSLTLGAAVAAVMA) threads the bilayer. The Cytoplasmic segment spans residues 190–228 (RFTRASFVDVLSEDYMRTARAKGVSETWVVLKHGLRNAM). A helical transmembrane segment spans residues 229–249 (IPVVTMMGLQFGFLLGGSIVV). The Periplasmic segment spans residues 250–277 (EKVFNWPGLGRLLVDSVEMRDYPVIQAE). A helical membrane pass occupies residues 278–298 (ILLFSLEFILINLVVDVLYAA). Residues 299–306 (INPAIRYK) lie on the Cytoplasmic side of the membrane.

This sequence belongs to the binding-protein-dependent transport system permease family. In terms of assembly, the complex is composed of two ATP-binding proteins (GsiA), two transmembrane proteins (GsiC and GsiD) and a solute-binding protein (GsiB).

Its subcellular location is the cell inner membrane. Part of the ABC transporter complex GsiABCD involved in glutathione import. Probably responsible for the translocation of the substrate across the membrane. This is Glutathione transport system permease protein GsiC from Shigella boydii serotype 4 (strain Sb227).